The primary structure comprises 452 residues: 1,3-beta-glucanosyltransferase gel1 (452 aa).

The N-terminal stretch at 1–19 is a signal peptide; the sequence is MKASAVTAALAVGASTVLA. A disulfide bridge connects residues cysteine 71 and cysteine 100. (1,3-beta-D-glucosyl)n is bound by residues tyrosine 89, asparagine 159, glutamate 160, aspartate 201, and arginine 206. Glutamate 160 functions as the Proton donor in the catalytic mechanism. 2 disulfide bridges follow: cysteine 215/cysteine 345 and cysteine 233/cysteine 264. N-linked (GlcNAc...) asparagine glycosylation is present at asparagine 249. The Nucleophile role is filled by glutamate 261. Tyrosine 292 contributes to the (1,3-beta-D-glucosyl)n binding site. Residues 325–340 are compositionally biased toward polar residues; sequence EKTSNPSGDGNYNKTG. Positions 325 to 419 are disordered; sequence EKTSNPSGDG…SGTSTSSKGA (95 aa). Asparagine 337 carries N-linked (GlcNAc...) asparagine glycosylation. Residues 393-419 are compositionally biased toward low complexity; sequence STATAEPGSGSATGSSSSGTSTSSKGA. The GPI-like-anchor amidated alanine moiety is linked to residue alanine 419. The propeptide at 420–452 is removed in mature form; that stretch reads AAGLTVPSLTMAPVVVGAVTLLSTVFGAGLVLL.

Belongs to the glycosyl hydrolase 72 family. The GPI-like anchor contains a phosphoceramide lipid group. The anchor position has not been determined.

It is found in the cell membrane. Its function is as follows. Splits internally a 1,3-beta-glucan molecule and transfers the newly generated reducing end (the donor) to the non-reducing end of another 1,3-beta-glucan molecule (the acceptor) forming a 1,3-beta linkage, resulting in the elongation of 1,3-beta-glucan chains in the cell wall. Involved in cell wall morphogenesis. In Aspergillus fumigatus (strain CBS 144.89 / FGSC A1163 / CEA10) (Neosartorya fumigata), this protein is 1,3-beta-glucanosyltransferase gel1 (gel1).